Here is a 528-residue protein sequence, read N- to C-terminus: Cytochrome P450 monooxygenase lenC (528 aa).

Residues 5-27 (FVLPHPASMGASCILGLLLLTIL) form a helical membrane-spanning segment. Cysteine 469 contacts heme.

This sequence belongs to the cytochrome P450 family. Heme serves as cofactor.

The protein resides in the membrane. The protein operates within alkaloid biosynthesis. Functionally, nonribosomal peptide synthetase; part of the gene cluster that mediates the biosynthesis of the ergot alkaloids lentopeptins A and B. Within the pathway, lenC catalyzes the post-NRPS oxidative modification steps using as substrate the N-acyldiketopiperazine intermediate produced by the NRPS lenA. Lentopeptin A forms via a stereospecific hydroxylation, followed by a spontaneous bicyclic lactam core formation, while lentopeptin B is produced through an initial dehydrogenation, followed by a bicyclic lactam core formation and stereospecific hydration. The phenylalanine ammonia-lyase lenB provides the cinnamic acid starter unit to the NRPS lenA for the synthesis of the N-acyldiketopiperazine intermediate which in turn is converted into lentopeptins A and B by lenC. In Aspergillus lentulus, this protein is Cytochrome P450 monooxygenase lenC.